A 1374-amino-acid polypeptide reads, in one-letter code: Y' element ATP-dependent helicase YLL066C (1374 aa).

Residues 321-345 (AGEAASSDHDQKISRVTRKRPREPK) are disordered. One can recognise a Helicase ATP-binding domain in the interval 375–552 (EIYMADTPSV…LQRIGLTGLA (178 aa)). 388–395 (APPGYGKT) is a binding site for ATP. The short motif at 498-501 (DEFH) is the DEAH box element. The 150-residue stretch at 609-758 (KLLLALFEIE…EFYGLESKKG (150 aa)) folds into the Helicase C-terminal domain. Positions 832 to 975 (ANASTNATTN…ATTTESTNAS (144 aa)) are enriched in low complexity. The segment at 832 to 999 (ANASTNATTN…RFHPVTDINK (168 aa)) is disordered. Residues 976-999 (AKEDANKDGNAEDNRFHPVTDINK) show a composition bias toward basic and acidic residues.

The protein belongs to the helicase family. Yeast subtelomeric Y' repeat subfamily.

In terms of biological role, catalyzes DNA unwinding and is involved in telomerase-independent telomere maintenance. The chain is Y' element ATP-dependent helicase YLL066C from Saccharomyces cerevisiae (strain ATCC 204508 / S288c) (Baker's yeast).